Consider the following 243-residue polypeptide: RNA-binding protein with serine-rich domain 1 homolog (243 aa).

The segment at 48–92 is disordered; the sequence is SSTRQFNNTRSPSGRSASRSSNFSHRSSSRDSFSSNRSYSSSLSR. Residues 57–92 are compositionally biased toward low complexity; sequence RSPSGRSASRSSNFSHRSSSRDSFSSNRSYSSSLSR. The RRM domain maps to 99 to 177; that stretch reads RTILVENLTR…EELFVSIKRF (79 aa). Residues 189–243 form a disordered region; sequence YENSYRPSRSQNNSHYNDKSFHRSRYSRARSRSPGSNISEYSDQSPPYHSYRHRP. The span at 193 to 203 shows a compositional bias: polar residues; that stretch reads YRPSRSQNNSH. Basic residues predominate over residues 210–219; it reads HRSRYSRARS. Residues 222 to 235 show a composition bias toward polar residues; that stretch reads PGSNISEYSDQSPP.

It belongs to the splicing factor SR family. Component of the active spliceosome.

It localises to the cytoplasm. The protein resides in the nucleus. Its function is as follows. Putative component of the spliceosome which enhances the formation of the ATP-dependent A complex of the spliceosome. may participate in mRNA 3'-end cleavage. Also mediates increase of mRNA abundance and translational efficiency. The protein is RNA-binding protein with serine-rich domain 1 homolog of Schizosaccharomyces pombe (strain 972 / ATCC 24843) (Fission yeast).